The chain runs to 321 residues: Lipoyl synthase (321 aa).

Residues cysteine 68, cysteine 73, cysteine 79, cysteine 94, cysteine 98, cysteine 101, and serine 308 each contribute to the [4Fe-4S] cluster site. One can recognise a Radical SAM core domain in the interval 80–297; sequence FNHGTATFMI…KAEALAMGFT (218 aa).

It belongs to the radical SAM superfamily. Lipoyl synthase family. Requires [4Fe-4S] cluster as cofactor.

It localises to the cytoplasm. It catalyses the reaction [[Fe-S] cluster scaffold protein carrying a second [4Fe-4S](2+) cluster] + N(6)-octanoyl-L-lysyl-[protein] + 2 oxidized [2Fe-2S]-[ferredoxin] + 2 S-adenosyl-L-methionine + 4 H(+) = [[Fe-S] cluster scaffold protein] + N(6)-[(R)-dihydrolipoyl]-L-lysyl-[protein] + 4 Fe(3+) + 2 hydrogen sulfide + 2 5'-deoxyadenosine + 2 L-methionine + 2 reduced [2Fe-2S]-[ferredoxin]. Its pathway is protein modification; protein lipoylation via endogenous pathway; protein N(6)-(lipoyl)lysine from octanoyl-[acyl-carrier-protein]: step 2/2. In terms of biological role, catalyzes the radical-mediated insertion of two sulfur atoms into the C-6 and C-8 positions of the octanoyl moiety bound to the lipoyl domains of lipoate-dependent enzymes, thereby converting the octanoylated domains into lipoylated derivatives. The protein is Lipoyl synthase of Salmonella typhi.